The chain runs to 464 residues: E3 ubiquitin-protein ligase RNF38 (464 aa).

A disordered region spans residues 1–94; that stretch reads MRESEDSPSP…NSISQDENYH (94 aa). The Bipartite nuclear localization signal 1 signature appears at 6-20; the sequence is DSPSPKRQRLSHSVF. A compositionally biased stretch (polar residues) spans 38–53; it reads MTSNRQPPSVRPNQHH. The short motif at 64-79 is the Bipartite nuclear localization signal 2 element; the sequence is RNRRSPPVRRQRGRRE. A compositionally biased stretch (basic residues) spans 64–83; that stretch reads RNRRSPPVRRQRGRRERLSR. The segment at 412–453 adopts an RING-type zinc-finger fold; the sequence is CVVCMCDFESRQLLRVLPCNHEFHAKCVDKWLKGNRTCPICR.

The protein localises to the nucleus. The enzyme catalyses S-ubiquitinyl-[E2 ubiquitin-conjugating enzyme]-L-cysteine + [acceptor protein]-L-lysine = [E2 ubiquitin-conjugating enzyme]-L-cysteine + N(6)-ubiquitinyl-[acceptor protein]-L-lysine.. The protein operates within protein modification; protein ubiquitination. In terms of biological role, acts as an E3 ubiquitin-protein ligase able to ubiquitinate p53/TP53 which promotes its relocalization to discrete foci associated with PML nuclear bodies. Exhibits preference for UBE2D2 as a E2 enzyme. The sequence is that of E3 ubiquitin-protein ligase RNF38 from Mus musculus (Mouse).